The following is a 227-amino-acid chain: uncharacterized protein (227 aa).

This is an uncharacterized protein from Schizosaccharomyces pombe (strain 972 / ATCC 24843) (Fission yeast).